The primary structure comprises 436 residues: Homeobox protein PKNOX1 (436 aa).

A disordered region spans residues 23-50; it reads ELKTEQDPNCSDPDAEGVSPPPIESQTP. Ser33 and Ser41 each carry phosphoserine. The 84-residue stretch at 80–163 folds into the MEIS N-terminal domain; the sequence is GSEGTTSASF…MNSETLLSGE (84 aa). The segment at residues 259-321 is a DNA-binding region (homeobox; TALE-type); sequence SKNKRGVLPK…NARRRILQPM (63 aa). Positions 401–436 are disordered; that stretch reads AGQSEDESVDSTEDEGGALAPTHISGLVLENSDSLQ. The span at 404 to 416 shows a compositional bias: acidic residues; that stretch reads SEDESVDSTEDEG.

This sequence belongs to the TALE/MEIS homeobox family. In terms of assembly, interacts with MN1.

The protein localises to the nucleus. In terms of biological role, activates transcription in the presence of PBX1A and HOXA1. Functionally, (Microbial infection) In complex with PBX1, binds to the 5'-TGATTGAC-3' consensus sequence in the U5 region of Moloney murine leukemia virus and promotes viral transcription. The polypeptide is Homeobox protein PKNOX1 (Mus musculus (Mouse)).